Consider the following 362-residue polypeptide: 3-dehydroquinate synthase (362 aa).

Residues 71–76, 105–109, 129–130, K142, K151, and 169–172 contribute to the NAD(+) site; these read DGEQYK, GVVGD, TT, and CLKT. The Zn(2+) site is built by E184, H247, and H264.

Belongs to the sugar phosphate cyclases superfamily. Dehydroquinate synthase family. It depends on Co(2+) as a cofactor. Zn(2+) is required as a cofactor. The cofactor is NAD(+).

The protein resides in the cytoplasm. The enzyme catalyses 7-phospho-2-dehydro-3-deoxy-D-arabino-heptonate = 3-dehydroquinate + phosphate. It functions in the pathway metabolic intermediate biosynthesis; chorismate biosynthesis; chorismate from D-erythrose 4-phosphate and phosphoenolpyruvate: step 2/7. In terms of biological role, catalyzes the conversion of 3-deoxy-D-arabino-heptulosonate 7-phosphate (DAHP) to dehydroquinate (DHQ). The sequence is that of 3-dehydroquinate synthase from Shigella boydii serotype 18 (strain CDC 3083-94 / BS512).